Consider the following 927-residue polypeptide: Disks large homolog 1 (927 aa).

The L27 domain maps to 4–64 (RKQDTQRALH…FYEVTLLDNP (61 aa)). T115 carries the phosphothreonine modification. Phosphoserine is present on residues S122, S138, and S158. Residues 162–212 (PTEAVPPSSPTVPVIPVLPVPAENTVILPTIPQANPPPVLVNTDSLETSTY) are interaction with SH3 domains. The tract at residues 224-546 (EITLERGNSG…QAVTIVAQYR (323 aa)) is required for interaction with MARCHF2. 3 PDZ domains span residues 230 to 317 (GNSG…SEKI), 325 to 412 (GPKG…YMND), and 474 to 555 (TGLG…RFEA). The residue at position 232 (S232) is a Phosphoserine. Y399 is modified (phosphotyrosine). Phosphoserine occurs at positions 568, 573, 575, 579, 598, 619, 707, 710, and 857. The SH3 domain maps to 581–651 (KRSLYVRALF…PSKRRVEKKE (71 aa)). In terms of domain architecture, Guanylate kinase-like spans 683–858 (RKFPFYKNKD…ISIFIKPKSM (176 aa)). A disordered region spans residues 691–719 (KDQSEQETSDADQHITSNASDSESSYRGQ). Residues 704 to 717 (HITSNASDSESSYR) are compositionally biased toward polar residues.

The protein belongs to the MAGUK family. As to quaternary structure, homotetramer. Interacts (via guanylate kinase-like domain) with DLGAP1, DLGAP2, DLGAP3, DLGAP4 and MAP1A. Interacts (via guanylate kinase-like domain) with KIF13B. May interact with HTR2A. Interacts (via PDZ domains) with GRIA1. Interacts (via PDZ domains) with GRIN2A. Interacts (via PDZ domains) with KCND2 and KCND3. Interacts (via PDZ domains) with KCNA1, KCNA2, KCNA3 and KCNA4. Interacts (via PDZ domains) with ADGRA3. Interacts with KCNF1. Interacts with CAMK2. Interacts with cytoskeleton-associated protein EPB41. Interacts with cytoskeleton-associated protein EZR. Found in a complex with KCNA5 and CAV3. Found in a complex with APC and CTNNB1. Interacts (via PDZ domains) with APC. Interacts with CDH1 through binding to PIK3R1. Forms multiprotein complexes with CASK, LIN7A, LIN7B, LIN7C, APBA1, and KCNJ12. Interacts with TOPK. Forms a tripartite complex composed of DLG1, MPP7 and LIN7 (LIN7A or LIN7C). May interact with TJAP1. Interacts with PTEN. Interacts with FRMPD4 (via C-terminus). Interacts with LRFN1, LRFN2 and LRFN4. Interacts with SFPQ. Interacts (via PDZ domains) with ADGRA2 (via PDZ-binding motif). Interacts with ADAM10; this interaction recruits ADAM10 to the cell membrane during long-term depression in hippocampal neurons. Interacts with DGKI (via PDZ-binding motif). Interacts (via PDZ domains) with MARCHF2 (via PDZ domain); the interaction leads to DLG1 ubiqtuitination and degradation. Interacts (via N-terminus) with MPP3; this interaction connects CADM1 with DLG1 and links CADM1 with the regulatory subunit of phosphoinositide-3-kinase (PI3K) by forming a multiprotein complex and participates in cell spreading. Post-translationally, phosphorylated by MAPK12. Phosphorylation of Ser-232 regulates association with GRIN2A. Ubiquitinated; by MARCHF2 which results in its degradation.

Its subcellular location is the cell membrane. The protein resides in the basolateral cell membrane. It is found in the endoplasmic reticulum membrane. The protein localises to the postsynaptic density. It localises to the synapse. Its subcellular location is the sarcolemma. The protein resides in the apical cell membrane. It is found in the cell junction. The protein localises to the cytoplasm. In terms of biological role, essential multidomain scaffolding protein required for normal development. Recruits channels, receptors and signaling molecules to discrete plasma membrane domains in polarized cells. Promotes epithelial cell layer barrier function via maintaining cell-cell adhesion. May also play a role in adherens junction assembly, signal transduction, cell proliferation, synaptogenesis and lymphocyte activation. Regulates the excitability of cardiac myocytes by modulating the functional expression of Kv4 channels. Functional regulator of Kv1.5 channel. During long-term depression in hippocampal neurons, it recruits ADAM10 to the plasma membrane. The polypeptide is Disks large homolog 1 (DLG1) (Canis lupus familiaris (Dog)).